The chain runs to 150 residues: Macrodomain Ter protein (150 aa).

The protein belongs to the MatP family. As to quaternary structure, homodimer.

Its subcellular location is the cytoplasm. Required for spatial organization of the terminus region of the chromosome (Ter macrodomain) during the cell cycle. Prevents early segregation of duplicated Ter macrodomains during cell division. Binds specifically to matS, which is a 13 bp signature motif repeated within the Ter macrodomain. In Citrobacter koseri (strain ATCC BAA-895 / CDC 4225-83 / SGSC4696), this protein is Macrodomain Ter protein.